The following is a 184-amino-acid chain: Guanylate kinase (184 aa).

The Guanylate kinase-like domain maps to 5–183 (KKLIILTGPS…TAKRIIKLIQ (179 aa)). Position 12–19 (12–19 (GPSGVGKG)) interacts with ATP.

Belongs to the guanylate kinase family.

The protein localises to the cytoplasm. It carries out the reaction GMP + ATP = GDP + ADP. Essential for recycling GMP and indirectly, cGMP. The polypeptide is Guanylate kinase (Prochlorococcus marinus (strain MIT 9312)).